A 1035-amino-acid chain; its full sequence is Sulfite reductase [NADPH] flavoprotein component (1035 aa).

The FAD-binding FR-type domain maps to 648–879; that stretch reads VKNFVVKVKE…VKPSVMKLPP (232 aa). FAD-binding positions include 684–695 and 814–824; these read YDIGEALGIHAR and LKRREYSIASS.

Requires FAD as cofactor. It depends on FMN as a cofactor.

The enzyme catalyses hydrogen sulfide + 3 NADP(+) + 3 H2O = sulfite + 3 NADPH + 4 H(+). It functions in the pathway sulfur metabolism; hydrogen sulfide biosynthesis; hydrogen sulfide from sulfite (NADPH route): step 1/1. Its function is as follows. This enzyme catalyzes the 6-electron reduction of sulfite to sulfide. This is one of several activities required for the biosynthesis of L-cysteine from sulfate. In Saccharomyces cerevisiae (strain ATCC 204508 / S288c) (Baker's yeast), this protein is Sulfite reductase [NADPH] flavoprotein component (MET10).